Consider the following 319-residue polypeptide: Beta-ketoacyl-[acyl-carrier-protein] synthase III (319 aa).

Residues Cys-110 and His-246 contribute to the active site. Positions 247–251 are ACP-binding; the sequence is QANYR. The active site involves Asn-276.

Belongs to the thiolase-like superfamily. FabH family. In terms of assembly, homodimer.

The protein resides in the cytoplasm. The catalysed reaction is malonyl-[ACP] + acetyl-CoA + H(+) = 3-oxobutanoyl-[ACP] + CO2 + CoA. It participates in lipid metabolism; fatty acid biosynthesis. Its function is as follows. Catalyzes the condensation reaction of fatty acid synthesis by the addition to an acyl acceptor of two carbons from malonyl-ACP. Catalyzes the first condensation reaction which initiates fatty acid synthesis and may therefore play a role in governing the total rate of fatty acid production. Possesses both acetoacetyl-ACP synthase and acetyl transacylase activities. Its substrate specificity determines the biosynthesis of branched-chain and/or straight-chain of fatty acids. The chain is Beta-ketoacyl-[acyl-carrier-protein] synthase III from Lactobacillus delbrueckii subsp. bulgaricus (strain ATCC BAA-365 / Lb-18).